Consider the following 290-residue polypeptide: Eukaryotic translation initiation factor 3 subunit G (290 aa).

The interval 1–34 is disordered; it reads MSRLGNRAADWADDEEFDDPSALPAQQVTTNKDG. The 79-residue stretch at 210 to 288 folds into the RRM domain; that stretch reads ATLRVTNVSE…LILRVEFAKR (79 aa).

The protein belongs to the eIF-3 subunit G family. In terms of assembly, component of the eukaryotic translation initiation factor 3 (eIF-3) complex.

It is found in the cytoplasm. In terms of biological role, RNA-binding component of the eukaryotic translation initiation factor 3 (eIF-3) complex, which is involved in protein synthesis of a specialized repertoire of mRNAs and, together with other initiation factors, stimulates binding of mRNA and methionyl-tRNAi to the 40S ribosome. The eIF-3 complex specifically targets and initiates translation of a subset of mRNAs involved in cell proliferation. This subunit can bind 18S rRNA. This Aspergillus fumigatus (strain CBS 144.89 / FGSC A1163 / CEA10) (Neosartorya fumigata) protein is Eukaryotic translation initiation factor 3 subunit G (tif35).